The chain runs to 434 residues: Trigger factor (434 aa).

Positions 161-246 (GDRVVIDFAG…VKGVEAPILP (86 aa)) constitute a PPIase FKBP-type domain.

The protein belongs to the FKBP-type PPIase family. Tig subfamily.

It is found in the cytoplasm. It carries out the reaction [protein]-peptidylproline (omega=180) = [protein]-peptidylproline (omega=0). Involved in protein export. Acts as a chaperone by maintaining the newly synthesized protein in an open conformation. Functions as a peptidyl-prolyl cis-trans isomerase. In Aromatoleum aromaticum (strain DSM 19018 / LMG 30748 / EbN1) (Azoarcus sp. (strain EbN1)), this protein is Trigger factor.